The primary structure comprises 505 residues: Protein nucleotidyltransferase YdiU (505 aa).

ATP contacts are provided by Gly-102, Gly-104, Arg-105, Lys-125, Asp-137, Gly-138, Arg-188, and Arg-195. Catalysis depends on Asp-264, which acts as the Proton acceptor. Asn-265 and Asp-274 together coordinate Mg(2+). Asp-274 contributes to the ATP binding site. Residues 485–505 (FADYGKPPAPGEEVQQTFCGT) form a disordered region.

The protein belongs to the SELO family. Mg(2+) is required as a cofactor. Requires Mn(2+) as cofactor.

It catalyses the reaction L-seryl-[protein] + ATP = 3-O-(5'-adenylyl)-L-seryl-[protein] + diphosphate. It carries out the reaction L-threonyl-[protein] + ATP = 3-O-(5'-adenylyl)-L-threonyl-[protein] + diphosphate. The catalysed reaction is L-tyrosyl-[protein] + ATP = O-(5'-adenylyl)-L-tyrosyl-[protein] + diphosphate. The enzyme catalyses L-histidyl-[protein] + UTP = N(tele)-(5'-uridylyl)-L-histidyl-[protein] + diphosphate. It catalyses the reaction L-seryl-[protein] + UTP = O-(5'-uridylyl)-L-seryl-[protein] + diphosphate. It carries out the reaction L-tyrosyl-[protein] + UTP = O-(5'-uridylyl)-L-tyrosyl-[protein] + diphosphate. Its function is as follows. Nucleotidyltransferase involved in the post-translational modification of proteins. It can catalyze the addition of adenosine monophosphate (AMP) or uridine monophosphate (UMP) to a protein, resulting in modifications known as AMPylation and UMPylation. This Nitrobacter hamburgensis (strain DSM 10229 / NCIMB 13809 / X14) protein is Protein nucleotidyltransferase YdiU.